The chain runs to 631 residues: Phosphomethylpyrimidine synthase (631 aa).

Substrate-binding positions include N239, M268, Y297, H333, 353–355, 394–397, and E433; these read SRG and DGLR. H437 lines the Zn(2+) pocket. Y460 contacts substrate. Zn(2+) is bound at residue H501. [4Fe-4S] cluster is bound by residues C581, C584, and C589.

It belongs to the ThiC family. As to quaternary structure, homodimer. [4Fe-4S] cluster is required as a cofactor.

It catalyses the reaction 5-amino-1-(5-phospho-beta-D-ribosyl)imidazole + S-adenosyl-L-methionine = 4-amino-2-methyl-5-(phosphooxymethyl)pyrimidine + CO + 5'-deoxyadenosine + formate + L-methionine + 3 H(+). It participates in cofactor biosynthesis; thiamine diphosphate biosynthesis. Catalyzes the synthesis of the hydroxymethylpyrimidine phosphate (HMP-P) moiety of thiamine from aminoimidazole ribotide (AIR) in a radical S-adenosyl-L-methionine (SAM)-dependent reaction. This Salmonella heidelberg (strain SL476) protein is Phosphomethylpyrimidine synthase.